The primary structure comprises 61 residues: Large ribosomal subunit protein eL24 (61 aa).

Zn(2+)-binding residues include Cys-7, Cys-10, Cys-33, and Cys-37. Residues 7–37 form a C4-type zinc finger; the sequence is CSFCGKEIPPATGLMYIRNDGSILWFCSNKC.

The protein belongs to the eukaryotic ribosomal protein eL24 family. In terms of assembly, part of the 50S ribosomal subunit. Forms a cluster with proteins L3 and L14. Zn(2+) is required as a cofactor.

Binds to the 23S rRNA. This is Large ribosomal subunit protein eL24 from Sulfurisphaera tokodaii (strain DSM 16993 / JCM 10545 / NBRC 100140 / 7) (Sulfolobus tokodaii).